The sequence spans 274 residues: F-actin-capping protein subunit alpha (274 aa).

Belongs to the F-actin-capping protein alpha subunit family. As to quaternary structure, heterodimer of an alpha and a beta subunit.

Its subcellular location is the cytoplasm. Its function is as follows. F-actin-capping proteins bind in a Ca(2+)-independent manner to the fast growing ends of actin filaments (barbed end) thereby blocking the exchange of subunits at these ends. Unlike other capping proteins (such as gelsolin and severin), these proteins do not sever actin filaments. The polypeptide is F-actin-capping protein subunit alpha (Chaetomium thermophilum (strain DSM 1495 / CBS 144.50 / IMI 039719) (Thermochaetoides thermophila)).